We begin with the raw amino-acid sequence, 367 residues long: Apolipoprotein A-V (367 aa).

The signal sequence occupies residues 1-20 (MVAVLTWALALLSAFATVQT). The residue at position 56 (Ser-56) is a Phosphoserine. A disordered region spans residues 71–90 (LGPLSGQGREPPGLPHDPEG).

This sequence belongs to the apolipoprotein A1/A4/E family. In terms of assembly, interacts with GPIHBP1. Interacts with SORL1; this interaction leads to APOA5 internalization and sorting either to lysosomes and degradation, or to the trans-Golgi network. Phosphorylated by FAM20C in the extracellular medium.

It localises to the secreted. The protein localises to the early endosome. It is found in the late endosome. The protein resides in the golgi apparatus. Its subcellular location is the trans-Golgi network. Minor apolipoprotein mainly associated with HDL and to a lesser extent with VLDL. May also be associated with chylomicrons. Important determinant of plasma triglyceride (TG) levels by both being a potent stimulator of apo-CII lipoprotein lipase (LPL) TG hydrolysis and an inhibitor of the hepatic VLDL-TG production rate (without affecting the VLDL-apoB production rate). Activates poorly lecithin:cholesterol acyltransferase (LCAT) and does not enhance efflux of cholesterol from macrophages. Binds heparin. The protein is Apolipoprotein A-V (APOA5) of Leptonychotes weddellii (Weddell seal).